A 287-amino-acid chain; its full sequence is Bifunctional protein FolD (287 aa).

NADP(+) contacts are provided by residues 166-168 (GAS) and Ile232.

This sequence belongs to the tetrahydrofolate dehydrogenase/cyclohydrolase family. In terms of assembly, homodimer.

It carries out the reaction (6R)-5,10-methylene-5,6,7,8-tetrahydrofolate + NADP(+) = (6R)-5,10-methenyltetrahydrofolate + NADPH. The catalysed reaction is (6R)-5,10-methenyltetrahydrofolate + H2O = (6R)-10-formyltetrahydrofolate + H(+). It functions in the pathway one-carbon metabolism; tetrahydrofolate interconversion. Its function is as follows. Catalyzes the oxidation of 5,10-methylenetetrahydrofolate to 5,10-methenyltetrahydrofolate and then the hydrolysis of 5,10-methenyltetrahydrofolate to 10-formyltetrahydrofolate. The polypeptide is Bifunctional protein FolD (Buchnera aphidicola subsp. Baizongia pistaciae (strain Bp)).